The sequence spans 449 residues: GTPase Der (449 aa).

EngA-type G domains are found at residues 2 to 169 and 180 to 355; these read FTVA…QLPP and VRFC…EQLT. GTP is bound by residues 8–15, 55–59, 118–121, 186–193, 233–237, and 298–301; these read GRPNVGKS, DTGGL, NKSE, GKPNVGKS, DTAGI, and NKWD. The region spanning 356 to 440 is the KH-like domain; that stretch reads KKISTSLLND…PITLYFKSKN (85 aa).

The protein belongs to the TRAFAC class TrmE-Era-EngA-EngB-Septin-like GTPase superfamily. EngA (Der) GTPase family. In terms of assembly, associates with the 50S ribosomal subunit.

GTPase that plays an essential role in the late steps of ribosome biogenesis. In Mycoplasma pneumoniae (strain ATCC 29342 / M129 / Subtype 1) (Mycoplasmoides pneumoniae), this protein is GTPase Der.